A 527-amino-acid polypeptide reads, in one-letter code: Coproporphyrinogen III oxidase (527 aa).

Residues 1–14 (MSTTDRVTTPTPTV) show a composition bias toward low complexity. The interval 1–23 (MSTTDRVTTPTPTVSGTDAPGPD) is disordered. Residues 33–38 (GGGITG), 56–57 (ES), lysine 64, and 78–81 (GPDS) contribute to the FAD site. The tract at residues 231 to 267 (RRAARQRAAQNNAQQNSSHQNSTGQNNSAGTRGPAAS) is disordered. Low complexity predominate over residues 236–252 (QRAAQNNAQQNSSHQNS). FAD-binding positions include valine 300, tryptophan 448, and 487–489 (VGL).

This sequence belongs to the protoporphyrinogen/coproporphyrinogen oxidase family. Coproporphyrinogen III oxidase subfamily. The cofactor is FAD.

The protein localises to the cytoplasm. It catalyses the reaction coproporphyrinogen III + 3 O2 = coproporphyrin III + 3 H2O2. Its pathway is porphyrin-containing compound metabolism; protoheme biosynthesis. Its function is as follows. Involved in coproporphyrin-dependent heme b biosynthesis. Catalyzes the oxidation of coproporphyrinogen III to coproporphyrin III. The protein is Coproporphyrinogen III oxidase of Propionibacterium freudenreichii subsp. freudenreichii.